We begin with the raw amino-acid sequence, 598 residues long: UvrABC system protein C (598 aa).

Positions 14–91 constitute a GIY-YIG domain; that stretch reads DSPGCYLHKD…IQKNMPKYNI (78 aa). The 36-residue stretch at 196-231 folds into the UVR domain; the sequence is DKIIEDLRSKMLAASEEMAFERAAEYRDLISGIATM.

It belongs to the UvrC family. Interacts with UvrB in an incision complex.

Its subcellular location is the cytoplasm. Its function is as follows. The UvrABC repair system catalyzes the recognition and processing of DNA lesions. UvrC both incises the 5' and 3' sides of the lesion. The N-terminal half is responsible for the 3' incision and the C-terminal half is responsible for the 5' incision. This Streptococcus pyogenes serotype M12 (strain MGAS2096) protein is UvrABC system protein C.